The following is a 453-amino-acid chain: Major fimbrium subunit FimC (453 aa).

The N-terminal stretch at 1–28 (MKMKYFHHPSGLLPRLLLLLLLTMGAVA) is a signal peptide. A lipid anchor (N-palmitoyl cysteine) is attached at Cys29. Cys29 carries the S-diacylglycerol cysteine lipid modification. A propeptide spanning residues 29–56 (CTKEDNPDQPTSDEVATVKMSLDDVEMR) is cleaved from the precursor.

The protein belongs to the bacteroidetes fimbrillin superfamily. FimA/Mfa1 family. As to quaternary structure, fimbriae are composed of a major, structural subunit and the minor components FimC, FimD and FimE. Identified in a complex composed of FimC, FimD and FimE (in vitro). The complex interacts with host extracellular matrix proteins, including fibronectin and type I collagen. Interacts with host CXCR4.

The protein localises to the fimbrium. It is found in the cell outer membrane. Functionally, minor component of fimbriae. These long, filamentous pili are attached to the cell surface; they mediate biofilm formation, adhesion onto host cells and onto other bacteria that are part of the oral microbiome. They play an important role in invasion of periodontal tissues and are major virulence factors. FimC, FimD and FimE contribute to interaction with host CXCR4 and thereby down-regulate the TLR2-mediated host immune response. The chain is Major fimbrium subunit FimC from Porphyromonas gingivalis (strain ATCC 33277 / DSM 20709 / CIP 103683 / JCM 12257 / NCTC 11834 / 2561).